A 169-amino-acid polypeptide reads, in one-letter code: S-ribosylhomocysteine lyase (169 aa).

Residues His54, His58, and Cys129 each coordinate Fe cation.

It belongs to the LuxS family. As to quaternary structure, homodimer. It depends on Fe cation as a cofactor.

The catalysed reaction is S-(5-deoxy-D-ribos-5-yl)-L-homocysteine = (S)-4,5-dihydroxypentane-2,3-dione + L-homocysteine. Involved in the synthesis of autoinducer 2 (AI-2) which is secreted by bacteria and is used to communicate both the cell density and the metabolic potential of the environment. The regulation of gene expression in response to changes in cell density is called quorum sensing. Catalyzes the transformation of S-ribosylhomocysteine (RHC) to homocysteine (HC) and 4,5-dihydroxy-2,3-pentadione (DPD). The polypeptide is S-ribosylhomocysteine lyase (Haemophilus ducreyi (strain 35000HP / ATCC 700724)).